The chain runs to 351 residues: Fe(3+) ions import ATP-binding protein FbpC (351 aa).

An ABC transporter domain is found at 7–237 (VVLKNICKRF…PKSMFMANFM (231 aa)). ATP is bound at residue 39–46 (GPSGCGKT).

The protein belongs to the ABC transporter superfamily. Fe(3+) ion importer (TC 3.A.1.10) family. In terms of assembly, the complex is composed of two ATP-binding proteins (FbpC), two transmembrane proteins (FbpB) and a solute-binding protein (FbpA).

The protein resides in the cell inner membrane. The enzyme catalyses Fe(3+)(out) + ATP + H2O = Fe(3+)(in) + ADP + phosphate + H(+). Functionally, part of the ABC transporter complex FbpABC involved in Fe(3+) ions import. Responsible for energy coupling to the transport system. The sequence is that of Fe(3+) ions import ATP-binding protein FbpC from Vibrio cholerae serotype O1 (strain ATCC 39315 / El Tor Inaba N16961).